The chain runs to 689 residues: Glycine--tRNA ligase beta subunit (689 aa).

It belongs to the class-II aminoacyl-tRNA synthetase family. As to quaternary structure, tetramer of two alpha and two beta subunits.

It is found in the cytoplasm. The enzyme catalyses tRNA(Gly) + glycine + ATP = glycyl-tRNA(Gly) + AMP + diphosphate. The chain is Glycine--tRNA ligase beta subunit from Shewanella baltica (strain OS185).